The primary structure comprises 591 residues: BRCA1-associated protein (591 aa).

The residue at position 52 (Ser52) is a Phosphoserine. A compositionally biased stretch (basic and acidic residues) spans 82-93; the sequence is DEVRDTVEEKKP. A disordered region spans residues 82–124; it reads DEVRDTVEEKKPSAAPVSAQRSREQSESVNTAPESPSKQLPDQ. Residues 108-124 show a composition bias toward polar residues; that stretch reads ESVNTAPESPSKQLPDQ. 2 positions are modified to phosphoserine: Ser116 and Ser118. The RING-type zinc finger occupies 263 to 303; that stretch reads CTVCLERMDESVNGILTTLCNHSFHSQCLQRWDDTTCPVCR. Residues 300–392 form a UBP-type; degenerate zinc finger; it reads PVCRYCQTPE…GKIVQYECEG (93 aa). Residues Cys316, Cys319, Cys328, Cys331, Cys336, His343, His347, and His353 each coordinate Zn(2+). Positions 430 to 536 form a coiled coil; sequence EKDTAEEINN…EIQEQLRDVM (107 aa). The segment at 563-591 is disordered; sequence IAMASAPNPPSSGAGGKLQSRKGRSKRGK. Positions 581–591 are enriched in basic residues; that stretch reads QSRKGRSKRGK.

As to quaternary structure, interacts with the nuclear localization signal of BRCA1 and with the N-terminal of KSR1. The C-terminal portion of BRCA1 interacts with DDB1. In terms of tissue distribution, isoform 2 is highly expressed in testis, lower levels in brain, heart, lung, stomach, colon, uterus, liver and kidney. Isoform 1 is only expressed in the testis. Isoform 2 is predominant over isoform 1 in both fetal and adult testis.

The protein localises to the cytoplasm. It catalyses the reaction S-ubiquitinyl-[E2 ubiquitin-conjugating enzyme]-L-cysteine + [acceptor protein]-L-lysine = [E2 ubiquitin-conjugating enzyme]-L-cysteine + N(6)-ubiquitinyl-[acceptor protein]-L-lysine.. It functions in the pathway protein modification; protein ubiquitination. Negatively regulates MAP kinase activation by limiting the formation of Raf/MEK complexes probably by inactivation of the KSR1 scaffold protein. Also acts as a Ras responsive E3 ubiquitin ligase that, on activation of Ras, is modified by auto-polyubiquitination resulting in the release of inhibition of Raf/MEK complex formation. May also act as a cytoplasmic retention protein with a role in regulating nuclear transport. The protein is BRCA1-associated protein of Mus musculus (Mouse).